Here is a 389-residue protein sequence, read N- to C-terminus: Phospho-N-acetylmuramoyl-pentapeptide-transferase (389 aa).

The next 11 helical transmembrane spans lie at 25–45 (RAVMANVTALVIGLGFGPWVI), 74–94 (MGGVLVLISIAISTLLWCDWG), 97–117 (FIWVVLLVTLGYGAIGWVDDY), 134–154 (FFWQTLIGLVAAVYLAFSVSE), 167–187 (WIEGGMFADVPYKMNLIVPFF), 190–210 (VSYPLGVTGFIVLTYLVIVGS), 222–242 (GLVIMPVVLVGGGLGVFAYVM), 259–279 (AGELLIFCSAMAGAGLAFLWF), 286–306 (VFMGDVGALALGGALGTVAVI), 311–331 (IVLFVMGGIFVVETLSVMLQV), and 366–386 (QVTVRFWIITMLLVLIGLSSL).

Belongs to the glycosyltransferase 4 family. MraY subfamily. Mg(2+) serves as cofactor.

Its subcellular location is the cell inner membrane. It carries out the reaction UDP-N-acetyl-alpha-D-muramoyl-L-alanyl-gamma-D-glutamyl-meso-2,6-diaminopimeloyl-D-alanyl-D-alanine + di-trans,octa-cis-undecaprenyl phosphate = di-trans,octa-cis-undecaprenyl diphospho-N-acetyl-alpha-D-muramoyl-L-alanyl-D-glutamyl-meso-2,6-diaminopimeloyl-D-alanyl-D-alanine + UMP. The protein operates within cell wall biogenesis; peptidoglycan biosynthesis. In terms of biological role, catalyzes the initial step of the lipid cycle reactions in the biosynthesis of the cell wall peptidoglycan: transfers peptidoglycan precursor phospho-MurNAc-pentapeptide from UDP-MurNAc-pentapeptide onto the lipid carrier undecaprenyl phosphate, yielding undecaprenyl-pyrophosphoryl-MurNAc-pentapeptide, known as lipid I. This chain is Phospho-N-acetylmuramoyl-pentapeptide-transferase, found in Cupriavidus metallidurans (strain ATCC 43123 / DSM 2839 / NBRC 102507 / CH34) (Ralstonia metallidurans).